Consider the following 234-residue polypeptide: Thymidylate kinase (234 aa).

21-28 lines the ATP pocket; it reads GGEGTGKS.

It belongs to the thymidylate kinase family.

It catalyses the reaction dTMP + ATP = dTDP + ADP. Phosphorylation of dTMP to form dTDP in both de novo and salvage pathways of dTTP synthesis. This is Thymidylate kinase from Rhizobium meliloti (strain 1021) (Ensifer meliloti).